The sequence spans 552 residues: Steroid transmembrane transporter SLC22A24 (552 aa).

Helical transmembrane passes span 16 to 36, 146 to 166, 178 to 200, 204 to 226, 234 to 254, 260 to 280, 350 to 370, 380 to 400, 407 to 427, 435 to 455, 474 to 492, and 496 to 516; these read FQIC…PNIV, SMVQ…YGHL, LCFL…LVYC, FLAG…EWTL, IMVL…LAFA, ILQL…WKMV, VFGL…LILN, LFQI…LLTL, ISQI…TFLP, VVLA…ASVH, VSGR…LMAY, and LPWI…LLLP.

Belongs to the major facilitator (TC 2.A.1) superfamily. Organic cation transporter (TC 2.A.1.19) family. Localized to the kidney. Highly specific expression pattern in the nephron, localized to segment 3 of the proximal tubule.

It localises to the cell membrane. The enzyme catalyses estrone 3-sulfate(out) + glutarate(in) = estrone 3-sulfate(in) + glutarate(out). The catalysed reaction is 17beta-estradiol 17-O-(beta-D-glucuronate)(out) + glutarate(in) = 17beta-estradiol 17-O-(beta-D-glucuronate)(in) + glutarate(out). It carries out the reaction taurocholate(out) + glutarate(in) = taurocholate(in) + glutarate(out). It catalyses the reaction 5alpha-androstane-3alpha,17beta-diol 3-O-(beta-D-glucuronate)(out) + glutarate(in) = 5alpha-androstane-3alpha,17beta-diol 3-O-(beta-D-glucuronate)(in) + glutarate(out). The enzyme catalyses glycocholate(out) + glutarate(in) = glycocholate(in) + glutarate(out). The catalysed reaction is dehydroepiandrosterone 3-sulfate(out) + glutarate(in) = dehydroepiandrosterone 3-sulfate(in) + glutarate(out). It carries out the reaction glutarate(in) + succinate(out) = glutarate(out) + succinate(in). Transport is chloride sensitive and transtimulated by glutaric acid. Transport is inhibited by anionic compounds from different chemical classes. Functionally, renal transmembrane organic anion/dicarboxylate exchanger that participates in the reabsorption of conjugated steroids including estradiol-17beta-D-glucuronide (or 17beta-estradiol 17-O-(beta-D-glucuronate)), androstanediol glucuronide (or 5alpha-androstane-3alpha,17beta-diol 3-O-(beta-D-glucuronate)), and estrone 3-sulfate, as well as bile acids taurocholate and glycocholate, driven by an outward gradient of dicarboxylates such as glutarate or succinate. Similar uptake function as Isoform 1. Its function is as follows. Lack of transporter activity. This chain is Steroid transmembrane transporter SLC22A24, found in Homo sapiens (Human).